A 160-amino-acid chain; its full sequence is Large ribosomal subunit protein uL15 (160 aa).

The span at 1–14 shows a compositional bias: polar residues; sequence MKLNDISDNPGSSK. The interval 1–35 is disordered; that stretch reads MKLNDISDNPGSSKSRMRVGRGIGSGKGKTCGRGV. The span at 21–35 shows a compositional bias: gly residues; the sequence is RGIGSGKGKTCGRGV.

This sequence belongs to the universal ribosomal protein uL15 family. As to quaternary structure, part of the 50S ribosomal subunit.

In terms of biological role, binds to the 23S rRNA. The chain is Large ribosomal subunit protein uL15 from Beijerinckia indica subsp. indica (strain ATCC 9039 / DSM 1715 / NCIMB 8712).